The chain runs to 196 residues: DnaA initiator-associating protein DiaA (196 aa).

The SIS domain maps to 34–196; it reads LVQSLLNGNK…DNTLFPHQDD (163 aa).

It belongs to the SIS family. DiaA subfamily. Homotetramer; dimer of dimers.

Functionally, required for the timely initiation of chromosomal replication via direct interactions with the DnaA initiator protein. The chain is DnaA initiator-associating protein DiaA from Klebsiella pneumoniae (strain 342).